We begin with the raw amino-acid sequence, 372 residues long: Tomoregulin-1 (372 aa).

The N-terminal stretch at 1–36 is a signal peptide; the sequence is MGAQAPLRLPAAPPLAVCGYTSVLLLFAFCLPGSRA. The Extracellular portion of the chain corresponds to 37 to 322; sequence SNQPAGGGGD…VPSRQKLTHV (286 aa). A glycan (N-linked (GlcNAc...) asparagine) is linked at asparagine 55. The Kazal-like 1 domain occupies 90 to 137; the sequence is ACQFQCHTNYIPVCGSNGDTYQNECFLRRAACKHQKDITVVARGPCYS. Disulfide bonds link cysteine 91–cysteine 121, cysteine 95–cysteine 114, and cysteine 103–cysteine 135. Asparagine 139 carries an N-linked (GlcNAc...) asparagine glycan. Positions 139–161 are disordered; it reads NGSGSGEGEEEGSGAGAHRKHSK. One can recognise a Kazal-like 2 domain in the interval 181–229; sequence VCNIDCSGYSFNPVCASDGSSYNNPCFVREASCIKQEQIDIRHLGHCTD. Intrachain disulfides connect cysteine 182–cysteine 213, cysteine 186–cysteine 206, cysteine 195–cysteine 227, cysteine 267–cysteine 280, cysteine 275–cysteine 291, and cysteine 293–cysteine 302. One can recognise an EGF-like domain in the interval 263–303; the sequence is SHMPCPENLNGYCIHGKCEFIYSTQKASCRCESGYTGQHCE. Residues 323–343 form a helical membrane-spanning segment; sequence LIAAIIGAVQIAIIVAIVMCI. The Cytoplasmic segment spans residues 344–372; that stretch reads TRKCPKNNRGRRQKQNLGHFTSDTSSRMV. The tract at residues 351-372 is disordered; the sequence is NRGRRQKQNLGHFTSDTSSRMV. The segment covering 358-372 has biased composition (polar residues); it reads QNLGHFTSDTSSRMV.

The protein belongs to the tomoregulin family. In terms of assembly, may interact with ST14. Maily expressed in neurons. Expressed in brain, neurointermediate lobe, pars distalis, pancreas, ovary and testis.

It localises to the cell membrane. Neuron-specific restriction factor that prevents herpes simplex virus 1 (HHV-1) infection in the brain by blocking viral entry. Also able to restrict herpes simplex virus 2 (HHV-2) infection, although to a lesser extent. Acts by preventing the association between the viral glycoprotein D (gD) and its cell surface receptor NECTIN1, thereby inhibiting fusion of the virus and the cell membrane. Also able to prevent the association between the viral glycoprotein B (gB) and MYH9/NMMHC-IIA and MYH10/NMMHC-IIB receptors. The chain is Tomoregulin-1 from Mus musculus (Mouse).